A 320-amino-acid polypeptide reads, in one-letter code: Cytochrome f (320 aa).

The signal sequence occupies residues Met-1–Ala-35. The heme site is built by Tyr-36, Cys-56, Cys-59, and His-60. The chain crosses the membrane as a helical span at residues Val-286–Lys-306.

Belongs to the cytochrome f family. In terms of assembly, the 4 large subunits of the cytochrome b6-f complex are cytochrome b6, subunit IV (17 kDa polypeptide, petD), cytochrome f and the Rieske protein, while the 4 small subunits are PetG, PetL, PetM and PetN. The complex functions as a dimer. The cofactor is heme.

The protein localises to the plastid. It localises to the chloroplast thylakoid membrane. Functionally, component of the cytochrome b6-f complex, which mediates electron transfer between photosystem II (PSII) and photosystem I (PSI), cyclic electron flow around PSI, and state transitions. This is Cytochrome f from Platanus occidentalis (Sycamore).